The chain runs to 2090 residues: Host cell factor 1 (2090 aa).

At Ala2 the chain carries N-acetylalanine. The residue at position 6 (Ser6) is a Phosphoserine. 5 Kelch repeats span residues 44–89, 93–140, 148–194, 217–265, and 266–313; these read LIVV…GFVC, RLLV…RLGH, KCYL…ITYG, KLVI…TIGN, and KMYV…LMDT. Glycyl lysine isopeptide (Lys-Gly) (interchain with G-Cter in ubiquitin) cross-links involve residues Lys105, Lys163, and Lys244. Lys282 participates in a covalent cross-link: Glycyl lysine isopeptide (Lys-Gly) (interchain with G-Cter in SUMO2). Lys288 is modified (N6-acetyllysine). Lys363 participates in a covalent cross-link: Glycyl lysine isopeptide (Lys-Gly) (interchain with G-Cter in ubiquitin). Positions 366–469 constitute a Fibronectin type-III 1 domain; the sequence is PPARVQLVRA…TIQVLPTVPG (104 aa). The interval 407–434 is disordered; the sequence is ATATSPTPNPVPSVPANPPKSPAPAAAA. The residue at position 411 (Ser411) is a Phosphoserine. The span at 413–428 shows a compositional bias: pro residues; that stretch reads TPNPVPSVPANPPKSP. The tract at residues 500 to 550 is required for interaction with OGT; sequence LVTMRPAGQAGKAPVTVTSLPASVRMVVPTQSAQGTVIGSNPQMSGMAALA. Arg504 and Arg524 each carry omega-N-methylarginine. Phosphoserine occurs at positions 598, 666, and 669. The interaction with SIN3A stretch occupies residues 610–722; the sequence is LKTAAAQVGT…KGPLPAGTIL (113 aa). An interaction with ZBTB17 region spans residues 750–902; sequence ILGISSVSPS…SLAGAGAHST (153 aa). Lys813 is modified (N6-acetyllysine). The interaction with GABP2 stretch occupies residues 813-912; that stretch reads KIITAVPKIA…SASLATPITT (100 aa). 3 HCF repeat repeats span residues 1010–1035, 1072–1097, and 1101–1126; these read TLVC…TVVA, VRVC…ATSN, and QHGC…AMSS. Residues 1098-1140 form a disordered region; the sequence is MAGQHGCSNPPCETHETGTTSTATTAMSSMGTGQQRDTRHTSS. Positions 1114 to 1130 are enriched in low complexity; it reads TGTTSTATTAMSSMGTG. The stretch at 1157–1182 is one HCF repeat 4; degenerate repeat; the sequence is TQGTVKPQCQTQQANMTNTTMTVQAT. Ser1204 bears the Phosphoserine mark. An Asymmetric dimethylarginine modification is found at Arg1216. Ser1223 bears the Phosphoserine mark. HCF repeat repeat units follow at residues 1295–1320 and 1323–1348; these read TQVC…SNAG and QRVC…ATSN. Disordered regions lie at residues 1302–1374 and 1444–1486; these read PCET…TTST and TVTS…TTVS. Residues 1308-1321 are compositionally biased toward low complexity; the sequence is TGTTNTATTSNAGS. The stretch at 1358–1383 is one HCF repeat 7; degenerate repeat; the sequence is QQPAGGRPCETHQTTSTGTTMSVSVG. Residues 1423-1448 form an HCF repeat 8 repeat; the sequence is QRVCSNPPCETHETGTTHTATTVTSN. Over residues 1465–1475 the composition is skewed to polar residues; it reads VVSTQGDSANI. The span at 1476–1486 shows a compositional bias: low complexity; it reads TSSSGITTTVS. Position 1500 is a phosphothreonine (Thr1500). Phosphoserine is present on residues Ser1506, Ser1559, and Ser1826. 2 consecutive Fibronectin type-III domains span residues 1853-1943 and 1945-2061; these read PPPP…TCLP and FPGA…TSKD. Glycyl lysine isopeptide (Lys-Gly) (interchain with G-Cter in ubiquitin) cross-links involve residues Lys1862 and Lys1863. Phosphoserine is present on Ser1893. Residues 2049–2090 form a disordered region; it reads ATQVRWLQETSKDSSGTKPASKRPMSSPEMKSAPKKSKADGQ. Lys2060 carries the N6-acetyllysine modification. Lys2079 is covalently cross-linked (Glycyl lysine isopeptide (Lys-Gly) (interchain with G-Cter in SUMO2)).

As to quaternary structure, composed predominantly of six polypeptides ranging from 110 to 150 kDa and a minor 300 kDa polypeptide. The majority of N- and C-terminal cleavage products remain tightly, albeit non-covalently, associated. Interacts with POU2F1, CREB3, ZBTB17, EGR2, E2F4, CREBZF, SP1, GABP2, Sin3 HDAC complex (SIN3A, HDAC1, HDAC2, SUDS3), SAP30, SIN3B and FHL2. Component of a MLL1 complex, composed of at least the core components KMT2A/MLL1, ASH2L, HCFC1, WDR5 and RBBP5, as well as the facultative components BACC1, CHD8, DPY30, E2F6, HCFC2, HSP70, INO80C, KANSL1, LAS1L, MAX, MCRS1, MEN1, MGA, KAT8, PELP1, PHF20, PRP31, RING2, RUVBL1, RUVBL2, SENP3, TAF1, TAF4, TAF6, TAF7, TAF9 and TEX10. Component of a THAP1/THAP3-HCFC1-OGT complex that is required for the regulation of the transcriptional activity of RRM1. Interacts directly with THAP3 (via its HBM). Interacts (via the Kelch-repeat domain) with THAP1 (via the HBM); the interaction recruits HCHC1 to the RRM1. Interacts directly with OGT; the interaction, which requires the HCFC1 cleavage site domain, glycosylates and promotes the proteolytic processing of HCFC1 and retains OGT in the nucleus. Component of the SET1 complex, at least composed of the catalytic subunit (SETD1A or SETD1B), WDR5, WDR82, RBBP5, ASH2L, CXXC1, HCFC1 and DPY30. Component of the NSL complex at least composed of MOF/KAT8, KANSL1, KANSL2, KANSL3, MCRS1, PHF20, OGT1/OGT, WDR5 and HCFC1. Component of a complex at least composed of ZNF335, HCFC1, CCAR2, EMSY, MKI67, RBBP5, ASH2L and WDR5; the complex is formed as a result of interactions between components of a nuclear receptor-mediated transcription complex and a histone methylation complex. Within the complex interacts with ZNF335. Interacts with TET2 and TET3. Interacts with HCFC1R1. Interacts with THAP11. Interacts (via Kelch domain) with KMT2E (via HBM motif). Interacts with E2F1. Accessory scaffold component of the polycomb repressive deubiquitinase (PR-DUB) complex, at least composed of BAP1, one of ASXL1, ASXL2 or (probably) ASXL3 and one of MBD5 or MBD6; the PR-DUB core associates with a number of accessory proteins, including FOXK1, FOXK2, KDM1B, HCFC1, YY1 and OGT. Interacts with YY1 (via Gly-rich region); the interaction is direct. Interacts with BAP1 (via HBM-like motif). Post-translationally, proteolytically cleaved at one or several PPCE--THET sites within the HCF repeats. Cleavage is promoted by O-glycosylation. Further cleavage of the primary N- and C-terminal chains results in a 'trimming' and accumulation of the smaller chains. Cleavage is promoted by O-glycosylation. O-glycosylated. GlcNAcylation by OGT promotes proteolytic processing. In terms of processing, ubiquitinated. Lys-1862 and Lys-1863 are ubiquitinated both via 'Lys-48'- and 'Lys-63'-linked polyubiquitin chains. BAP1 mediated deubiquitination of 'Lys-48'-linked polyubiquitin chains; deubiquitination by BAP1 does not seem to stabilize the protein.

The protein resides in the cytoplasm. It localises to the nucleus. Its function is as follows. Transcriptional coregulator. Serves as a scaffold protein, bridging interactions between transcription factors, including THAP11 and ZNF143, and transcriptional coregulators. Involved in control of the cell cycle. Also antagonizes transactivation by ZBTB17 and GABP2; represses ZBTB17 activation of the p15(INK4b) promoter and inhibits its ability to recruit p300. Coactivator for EGR2 and GABP2. Tethers the chromatin modifying Set1/Ash2 histone H3 'Lys-4' methyltransferase (H3K4me) and Sin3 histone deacetylase (HDAC) complexes (involved in the activation and repression of transcription respectively) together. As part of the NSL complex it may be involved in acetylation of nucleosomal histone H4 on several lysine residues. Recruits KMT2E to E2F1 responsive promoters promoting transcriptional activation and thereby facilitates G1 to S phase transition. Modulates expression of homeobox protein PDX1, perhaps acting in concert with transcription factor E2F1, thereby regulating pancreatic beta-cell growth and glucose-stimulated insulin secretion. May negatively modulate transcriptional activity of FOXO3. In Mesocricetus auratus (Golden hamster), this protein is Host cell factor 1.